A 596-amino-acid chain; its full sequence is Aspartate--tRNA(Asp/Asn) ligase (596 aa).

E182 contacts L-aspartate. The tract at residues 206–209 is aspartate; it reads QLFK. R228 provides a ligand contact to L-aspartate. ATP-binding positions include 228 to 230 and Q237; that span reads RDE. An L-aspartate-binding site is contributed by H456. Position 490 (E490) interacts with ATP. L-aspartate is bound at residue R497. Position 542–545 (542–545) interacts with ATP; the sequence is GLDR.

The protein belongs to the class-II aminoacyl-tRNA synthetase family. Type 1 subfamily. As to quaternary structure, homodimer.

The protein resides in the cytoplasm. It carries out the reaction tRNA(Asx) + L-aspartate + ATP = L-aspartyl-tRNA(Asx) + AMP + diphosphate. Its function is as follows. Aspartyl-tRNA synthetase with relaxed tRNA specificity since it is able to aspartylate not only its cognate tRNA(Asp) but also tRNA(Asn). Reaction proceeds in two steps: L-aspartate is first activated by ATP to form Asp-AMP and then transferred to the acceptor end of tRNA(Asp/Asn). In Syntrophotalea carbinolica (strain DSM 2380 / NBRC 103641 / GraBd1) (Pelobacter carbinolicus), this protein is Aspartate--tRNA(Asp/Asn) ligase.